The sequence spans 144 residues: Large ribosomal subunit protein uL13 (144 aa).

This sequence belongs to the universal ribosomal protein uL13 family. Part of the 50S ribosomal subunit.

Its function is as follows. This protein is one of the early assembly proteins of the 50S ribosomal subunit, although it is not seen to bind rRNA by itself. It is important during the early stages of 50S assembly. This is Large ribosomal subunit protein uL13 from Clostridium perfringens (strain ATCC 13124 / DSM 756 / JCM 1290 / NCIMB 6125 / NCTC 8237 / Type A).